A 323-amino-acid chain; its full sequence is Protein translocase subunit SecF (323 aa).

A run of 6 helical transmembrane segments spans residues 19-39 (GVIVSAILVLLALGLLFFKGF), 138-158 (ILSLILALIAIMVYVSFRYEW), 162-182 (LASVVALVHDVILVASSVIVF), 189-209 (EVIAALLTLIGYSINDTIIIF), 244-264 (LTVFFVVLILCVFGSKIIIGF), and 269-289 (LIGTIVGTYSSIFIAPKVALL).

This sequence belongs to the SecD/SecF family. SecF subfamily. In terms of assembly, forms a complex with SecD. Part of the essential Sec protein translocation apparatus which comprises SecA, SecYEG and auxiliary proteins SecDF-YajC and YidC.

The protein localises to the cell inner membrane. Part of the Sec protein translocase complex. Interacts with the SecYEG preprotein conducting channel. SecDF uses the proton motive force (PMF) to complete protein translocation after the ATP-dependent function of SecA. In Helicobacter pylori (strain J99 / ATCC 700824) (Campylobacter pylori J99), this protein is Protein translocase subunit SecF.